A 479-amino-acid chain; its full sequence is Phosphatidylinositol 4-kinase type 2-beta (479 aa).

Acidic residues predominate over residues 1–10 (MESGSEEPDE). Residues 1–91 (MESGSEEPDE…PRVGAGHTGH (91 aa)) form a disordered region. Low complexity predominate over residues 18–34 (PALHAGPPAGRAAPGGA). The segment covering 42–62 (GLEEEEEGEEDSGPEGDGEEE) has biased composition (acidic residues). In terms of domain architecture, PI3K/PI4K catalytic spans 118 to 449 (GVLPERISQG…VQMPRVIVER (332 aa)). The tract at residues 124-130 (ISQGSSG) is G-loop. 2 residues coordinate ATP: S131 and K146. Positions 151-153 (EPY) are important for substrate binding. An important for interaction with membranes region spans residues 159 to 172 (KWTKYFHKICCPCC). ATP is bound by residues 255–258 (QLFV) and 269–270 (RK). An important for interaction with membranes region spans residues 262 to 270 (KEADYWLRK). A catalytic loop region spans residues 299–307 (RNTDRGNDN). Residues 340–360 (AIDNGLAFPFKHPDEWRAYPF) are activation loop. D342 is a binding site for ATP. The important for interaction with membranes stretch occupies residues 355-364 (WRAYPFHWAW).

This sequence belongs to the PI3/PI4-kinase family. Type II PI4K subfamily.

It is found in the cytoplasm. The protein resides in the cytosol. Its subcellular location is the golgi apparatus membrane. The protein localises to the endoplasmic reticulum membrane. It localises to the cell membrane. It is found in the early endosome membrane. The enzyme catalyses a 1,2-diacyl-sn-glycero-3-phospho-(1D-myo-inositol) + ATP = a 1,2-diacyl-sn-glycero-3-phospho-(1D-myo-inositol 4-phosphate) + ADP + H(+). In terms of biological role, contributes to the overall PI4-kinase activity of the cell. This contribution may be especially significant in plasma membrane, endosomal and Golgi compartments. The phosphorylation of phosphatidylinositol (PI) to PI4P is the first committed step in the generation of phosphatidylinositol 4,5-bisphosphate (PIP2), a precursor of the second messenger inositol 1,4,5-trisphosphate (InsP3). In Gallus gallus (Chicken), this protein is Phosphatidylinositol 4-kinase type 2-beta (PI4K2B).